The sequence spans 884 residues: Protein translocase subunit SecA (884 aa).

Residues Gln83, 101–105, and Asp491 contribute to the ATP site; that span reads GEGKT.

Belongs to the SecA family.

It is found in the plastid. The protein localises to the chloroplast stroma. The protein resides in the chloroplast thylakoid membrane. It catalyses the reaction ATP + H2O + cellular proteinSide 1 = ADP + phosphate + cellular proteinSide 2.. In terms of biological role, has a central role in coupling the hydrolysis of ATP to the transfer of proteins across the thylakoid membrane. This chain is Protein translocase subunit SecA, found in Porphyra purpurea (Red seaweed).